Here is a 445-residue protein sequence, read N- to C-terminus: UDP-N-acetylmuramoylalanine--D-glutamate ligase (445 aa).

An ATP-binding site is contributed by 110–116; sequence GSNGKTT.

Belongs to the MurCDEF family.

It is found in the cytoplasm. The catalysed reaction is UDP-N-acetyl-alpha-D-muramoyl-L-alanine + D-glutamate + ATP = UDP-N-acetyl-alpha-D-muramoyl-L-alanyl-D-glutamate + ADP + phosphate + H(+). It participates in cell wall biogenesis; peptidoglycan biosynthesis. In terms of biological role, cell wall formation. Catalyzes the addition of glutamate to the nucleotide precursor UDP-N-acetylmuramoyl-L-alanine (UMA). This is UDP-N-acetylmuramoylalanine--D-glutamate ligase from Christiangramia forsetii (strain DSM 17595 / CGMCC 1.15422 / KT0803) (Gramella forsetii).